Consider the following 896-residue polypeptide: Cytokine receptor common subunit beta (896 aa).

The N-terminal stretch at 1–22 (MDQQMALTWGLCYMALVALCWG) is a signal peptide. Residues 23–441 (HGVTEAEETV…SEEYTWKTDW (419 aa)) are Extracellular-facing. A disulfide bridge connects residues cysteine 39 and cysteine 49. Asparagine 62 carries an N-linked (GlcNAc...) asparagine glycan. 2 disulfide bridges follow: cysteine 77-cysteine 99 and cysteine 88-cysteine 94. Residues 136–243 (PPLPKNVSIS…PEVHWDSQPG (108 aa)) enclose the Fibronectin type-III 1 domain. A glycan (N-linked (GlcNAc...) asparagine) is linked at asparagine 141. The segment covering 220-233 (SPGSSLSGRPSRWS) has biased composition (low complexity). Positions 220-243 (SPGSSLSGRPSRWSPEVHWDSQPG) are disordered. 2 disulfides stabilise this stretch: cysteine 253/cysteine 263 and cysteine 292/cysteine 310. Residues 343-439 (QMEPPTLNLT…KWSEEYTWKT (97 aa)) enclose the Fibronectin type-III 2 domain. N-linked (GlcNAc...) asparagine glycosylation is present at asparagine 350. A WSXWS motif motif is present at residues 428 to 432 (WSKWS). The helical transmembrane segment at 442–463 (VMPTLWIVLILVFLILTLLLIL) threads the bilayer. The Cytoplasmic segment spans residues 464–896 (RFGCVSVYRT…WDNSQSGKVC (433 aa)). The Box 1 motif signature appears at 477-485 (WKEKIPNPS). Disordered regions lie at residues 543–620 (EDPN…GGSL) and 658–725 (CGSS…TGPL). 2 stretches are compositionally biased toward polar residues: residues 555-571 (PDTTPAASSESTEQLPN) and 658-668 (CGSSLETSGSP). Positions 716–725 (PVLTLPTGPL) are enriched in low complexity. Serine 752 and serine 754 each carry phosphoserine. At tyrosine 765 the chain carries Phosphotyrosine. The interval 771–810 (SVSQAAKSPPGHPAPPVASSPTVIPGEPREEVGPASPHPE) is disordered.

The protein belongs to the type I cytokine receptor family. Type 4 subfamily. As to quaternary structure, heterodimer of an alpha and a beta subunit. The beta subunit is common to the IL3, IL5 and GM-CSF receptors. The signaling GM-CSF receptor complex is a dodecamer of two head-to-head hexamers of two alpha, two beta, and two ligand subunits. Interacts with TMEM102; this interaction occurs preferentially in the absence of CSF2. Interacts with FCER1G; this interaction is direct. Interacts with LYN. Post-translationally, may be phosphorylated by LYN.

The protein resides in the membrane. Its function is as follows. High affinity receptor for interleukin-3, interleukin-5 and granulocyte-macrophage colony-stimulating factor. This chain is Cytokine receptor common subunit beta (Csf2rb), found in Mus musculus (Mouse).